Here is a 55-residue protein sequence, read N- to C-terminus: Large ribosomal subunit protein bL33 (55 aa).

It belongs to the bacterial ribosomal protein bL33 family.

This is Large ribosomal subunit protein bL33 from Bordetella pertussis (strain Tohama I / ATCC BAA-589 / NCTC 13251).